We begin with the raw amino-acid sequence, 364 residues long: UDP-N-acetylglucosamine--N-acetylmuramyl-(pentapeptide) pyrophosphoryl-undecaprenol N-acetylglucosamine transferase (364 aa).

UDP-N-acetyl-alpha-D-glucosamine contacts are provided by residues 15–17 (TGG), asparagine 123, arginine 164, serine 191, and glutamine 286.

It belongs to the glycosyltransferase 28 family. MurG subfamily.

It localises to the cell inner membrane. It carries out the reaction di-trans,octa-cis-undecaprenyl diphospho-N-acetyl-alpha-D-muramoyl-L-alanyl-D-glutamyl-meso-2,6-diaminopimeloyl-D-alanyl-D-alanine + UDP-N-acetyl-alpha-D-glucosamine = di-trans,octa-cis-undecaprenyl diphospho-[N-acetyl-alpha-D-glucosaminyl-(1-&gt;4)]-N-acetyl-alpha-D-muramoyl-L-alanyl-D-glutamyl-meso-2,6-diaminopimeloyl-D-alanyl-D-alanine + UDP + H(+). The protein operates within cell wall biogenesis; peptidoglycan biosynthesis. Its function is as follows. Cell wall formation. Catalyzes the transfer of a GlcNAc subunit on undecaprenyl-pyrophosphoryl-MurNAc-pentapeptide (lipid intermediate I) to form undecaprenyl-pyrophosphoryl-MurNAc-(pentapeptide)GlcNAc (lipid intermediate II). This is UDP-N-acetylglucosamine--N-acetylmuramyl-(pentapeptide) pyrophosphoryl-undecaprenol N-acetylglucosamine transferase from Prochlorococcus marinus subsp. pastoris (strain CCMP1986 / NIES-2087 / MED4).